The following is a 345-amino-acid chain: MTKALSGFCCSLSLSTLVRSSSSHMDSDIVSSSIDRSQTAMPDALAFKSINDPIKNQINSCAAICVKQDDPCHFLRVLYESLITGGLAGVVVEAALYPIDTIKTRIQVARDGGKIIWKGLYSGLGGNLVGVLPASALFFGVYEPTKQKLLKVLPDNLSAVAHLAAGALGGAVSSIVRVPTEVVKQRMQTGQFVSAPDAVRLIIAKEGFGGMYAGYGSFLLRDLPFDALQFCVYEQLRIGYKLAARRDLNDPENAMIGAFAGAVTGVLTTPLDVIKTRLMVQGSGTQYKGVSDCIKTIIREEGSSALWKGMGPRVLWIGIGGSIFFGVLEKTKQILSERSQKSHNA.

A chloroplast-targeting transit peptide spans 1 to 31; sequence MTKALSGFCCSLSLSTLVRSSSSHMDSDIVS. Solcar repeat units lie at residues 76–148, 157–239, and 252–334; these read RVLY…TKQK, LSAV…LRIG, and ENAM…TKQI. 5 helical membrane passes run 82–102, 121–141, 156–176, 254–274, and 309–329; these read LITG…IDTI, YSGL…FFGV, NLSA…SSIV, AMIG…LDVI, and GMGP…GVLE.

Belongs to the mitochondrial carrier (TC 2.A.29) family. As to expression, expressed at low levels in seedlings, leaves, flowers, stems and roots.

It is found in the plastid. The protein resides in the chloroplast membrane. Its function is as follows. Probable S-adenosylmethionine (SAM) transporter able to catalyze both uniport and exchange reactions through membranes. In Arabidopsis thaliana (Mouse-ear cress), this protein is Probable S-adenosylmethionine carrier 2, chloroplastic (SAMC2).